The sequence spans 241 residues: MATVSMRDMLKAGVHFGHQTRYWNPKMKPFIFGARNKVHIINLEKTVPMFNEALAELNKISARKGKILFVGTKRAASEAVREAANSCDQFFVNHRWLGGMLTNWKTVRQSIKRLKDLETQSQDGTFEKLTKKEALMRTRELEKLENSLGGIKDMGGLPDALFVIDADHEHIAIKEANNLGIPVFAIVDTNSDPDGVDFVIPGNDDAIRAVSLYLGAVAATVREGRSQDLASQAEESFVEAE.

This sequence belongs to the universal ribosomal protein uS2 family.

The sequence is that of Small ribosomal subunit protein uS2 from Salmonella choleraesuis (strain SC-B67).